A 258-amino-acid chain; its full sequence is Hydroxyacylglutathione hydrolase (258 aa).

Positions 52, 54, 56, 57, 109, 126, and 164 each coordinate Zn(2+).

It belongs to the metallo-beta-lactamase superfamily. Glyoxalase II family. As to quaternary structure, monomer. Requires Zn(2+) as cofactor.

The catalysed reaction is an S-(2-hydroxyacyl)glutathione + H2O = a 2-hydroxy carboxylate + glutathione + H(+). It participates in secondary metabolite metabolism; methylglyoxal degradation; (R)-lactate from methylglyoxal: step 2/2. Its function is as follows. Thiolesterase that catalyzes the hydrolysis of S-D-lactoyl-glutathione to form glutathione and D-lactic acid. The sequence is that of Hydroxyacylglutathione hydrolase from Xylella fastidiosa (strain M12).